We begin with the raw amino-acid sequence, 474 residues long: MSAKTLYDKLWDSHVVREEEDGTALIYIDRQLLHEVTSPQAFEGLRLANRKPWRIDANLATPDHNVPTTAFNSVEDIVDPISRIQVQTLDANTKQFGITEFGIGDVRQGIVHVVGPEEGVTLPGMTLVCGDSHTATHGALGALAHGVGTSEVEHVLATQCLIQKKMKNMLVKVDGKLQPGVSPKDVVLAIIGQIGTAGGNGHAIEFGGQVFRDMSIEGRMTVCNMAIEAGARVGLVAVDEKTVEYVKGRPFAPKAEDWDAAVAAWQDLKSDDNAHFDKVVEMDGSKIEPQVSWGTSPEMVSDVNGKVPNPAHESDDVKAGGIRRALEYMGLEADMAITDIPVDYVFIGSCTNSRIEDFREAAAVLKGRKVASSVEQALVVPGSGLVKRQAEEEGLDKIFIEAGFEWRNPGCSMCLAMNADRLPSGKHCASTSNRNFEGRQGAGGRTHLVSPQMAAAAAVAGHFVDVRDMMKEAS.

3 residues coordinate [4Fe-4S] cluster: C350, C411, and C414.

The protein belongs to the aconitase/IPM isomerase family. LeuC type 1 subfamily. In terms of assembly, heterodimer of LeuC and LeuD. It depends on [4Fe-4S] cluster as a cofactor.

It catalyses the reaction (2R,3S)-3-isopropylmalate = (2S)-2-isopropylmalate. It functions in the pathway amino-acid biosynthesis; L-leucine biosynthesis; L-leucine from 3-methyl-2-oxobutanoate: step 2/4. Catalyzes the isomerization between 2-isopropylmalate and 3-isopropylmalate, via the formation of 2-isopropylmaleate. The polypeptide is 3-isopropylmalate dehydratase large subunit (Hydrogenovibrio crunogenus (strain DSM 25203 / XCL-2) (Thiomicrospira crunogena)).